An 84-amino-acid chain; its full sequence is uncharacterized protein (84 aa).

The helical transmembrane segment at 13 to 35 threads the bilayer; it reads TTLVLTIISTTTTTLFAIIQLYL. Residues 41–84 are a coiled coil; the sequence is LKDAVKEIVNSELSNLKTEIEELKIKQDELSRQVEEIKRKLDQK.

The protein resides in the host membrane. This is an uncharacterized protein from Sulfolobus islandicus rod-shaped virus 1 (SIRV-1).